The sequence spans 4128 residues: DNA-dependent protein kinase catalytic subunit (4128 aa).

Lysine 117 carries the N6-acetyllysine modification. An HEAT 1 repeat occupies 288–323; it reads DNYVSLFEVLLKWCAHTNVELKKAALSALESFLKQV. Phosphoserine occurs at positions 511 and 687. Position 828 is an N6-acetyllysine (lysine 828). Phosphoserine occurs at positions 841 and 893. The stretch at 1004 to 1040 is one HEAT 2 repeat; that stretch reads QDTVALLEAILDGIVDPVDSTLRDFCGRCIREFLKWS. Serine 1065 carries the phosphoserine modification. At lysine 1209 the chain carries N6-acetyllysine. The interval 1503–1538 is interaction with C1D; sequence LDLSCKQLASGLLELAFAFGGLCERLVSLLLNPAVL. Residues 1503-1538 are leucine-zipper; that stretch reads LDLSCKQLASGLLELAFAFGGLCERLVSLLLNPAVL. Residues 1723–1756 form a TPR 1 repeat; the sequence is PMQSREFPPGTPRFNNYVDCMKKFLDALELSQSP. Lysine 1970 bears the N6-acetyllysine mark. The segment at 2050–2073 is disordered; the sequence is QSYSYSSQDPRPATGRFRRREQRD. Residue serine 2056 is modified to Phosphoserine; by autocatalysis. Residue lysine 2259 is modified to N6-acetyllysine. A KIP-binding region spans residues 2436–3212; it reads LDIIYKMMPK…DNSMNVDQDG (777 aa). Threonine 2535 is modified (phosphothreonine). A Phosphothreonine; by autocatalysis modification is found at threonine 2609. A Phosphoserine; by autocatalysis modification is found at serine 2612. Phosphothreonine; by autocatalysis occurs at positions 2638 and 2647. A may split the end of the DNA molecule, with the two strands separating around the region region spans residues 2737 to 2765; it reads EKLSLMYARKGVAEQKREKEIKSELKMKQ. At serine 2789 the chain carries Phosphoserine. The 634-residue stretch at 2906–3539 folds into the FAT domain; sequence PAKRVRGKAR…VYPFIISSES (634 aa). TPR repeat units lie at residues 2920–2948 and 2949–2982; these read VLRW…SEIG and TKQI…QDWV. The interval 3200–3222 is disordered; the sequence is LPEDNSMNVDQDGDPSDRMEVQE. Serine 3205 is modified (phosphoserine). N6-acetyllysine occurs at positions 3241, 3260, 3621, 3638, and 3642. A PI3K/PI4K catalytic domain is found at 3722-4053; sequence FDERVTVMAS…ICYAKRKLAG (332 aa). The segment at 3728 to 3734 is G-loop; the sequence is VMASLRR. A phosphoserine mark is found at serine 3731 and serine 3821. Positions 3919–3927 are catalytic loop; the sequence is GIGDRHLNN. The segment at 3939–3964 is activation loop; it reads GIDFGHAFGSATQFLPVPELMPFRLT. Serine 4026 carries the post-translational modification Phosphoserine. The region spanning 4096–4128 is the FATC domain; the sequence is SGLSEETQVKCLMDQATDPNILGRTWEGWEPWM.

This sequence belongs to the PI3/PI4-kinase family. As to quaternary structure, DNA-PK is a heterotrimer of PRKDC and the Ku dimer (composed of XRCC6/Ku70 and XRCC5/Ku86). Formation of this complex may be promoted by interaction with ILF3. Component of the core long-range non-homologous end joining (NHEJ) complex (also named DNA-PK complex) composed of PRKDC, LIG4, XRCC4, XRCC6/Ku70, XRCC5/Ku86 and NHEJ1/XLF. Additional component of the NHEJ complex includes PAXX. Following autophosphorylation, PRKDC dissociates from DNA. Interacts with DNA-PKcs-interacting protein (KIP) with the region upstream the kinase domain. PRKDC alone also interacts with and phosphorylates DCLRE1C, thereby activating the latent endonuclease activity of this protein. Interacts with C1D. Interacts with TTI1 and TELO2. Interacts with CIB1. Interacts with SETX. Interacts with NR4A3; the DNA-dependent protein kinase complex DNA-PK phosphorylates and activates NR4A3 and prevents NR4A3 ubiquitination and degradation. Interacts with BRAT1. Part of the HDP-RNP complex composed of at least HEXIM1, PRKDC, XRCC5, XRCC6, paraspeckle proteins (SFPQ, NONO, PSPC1, RBM14, and MATR3) and NEAT1 RNA. Interacts with KAT5. In terms of processing, autophosphorylated at two clusters, the T2609 cluster and the S2056 cluster. Autophosphorylated on Ser-2056, Thr-2609, Thr-2638 and Thr-2647. Ser-2056 and Thr-2609 are DNA damage-inducible phosphorylation sites (inducible with ionizing radiation, IR) dephosphorylated by PPP5C. Autophosphorylation induces a conformational change that leads to remodeling of the DNA-PK complex, requisite for efficient end processing and DNA repair. Autophosphorylation in trans within DNA-PK complexes loaded on DNA ends leads to the dissociation of PRKDC from DNA and the transition into the short-range NHEJ complex. Autophosphorylation of the T2609 cluster is required for hematopoietic development and protein synthesis in erythrocytes precursors. Post-translationally, S-nitrosylated by GAPDH. Polyubiquitinated by RNF144A, leading to proteasomal degradation.

It is found in the nucleus. The protein localises to the nucleolus. The protein resides in the cytoplasm. It localises to the cytosol. It carries out the reaction L-seryl-[protein] + ATP = O-phospho-L-seryl-[protein] + ADP + H(+). The catalysed reaction is L-threonyl-[protein] + ATP = O-phospho-L-threonyl-[protein] + ADP + H(+). Activity seems to be attenuated by autophosphorylation. Binding to the SL1 region of U3 small nucleolar RNA promotes auto-phosphorylation activity. Inhibited by wortmannin. Its function is as follows. Serine/threonine-protein kinase that acts as a molecular sensor for DNA damage. Involved in DNA non-homologous end joining (NHEJ) required for double-strand break (DSB) repair and V(D)J recombination. Must be bound to DNA to express its catalytic properties. Promotes processing of hairpin DNA structures in V(D)J recombination by activation of the hairpin endonuclease artemis (DCLRE1C). Recruited by XRCC5 and XRCC6 to DNA ends and is required to (1) protect and align broken ends of DNA, thereby preventing their degradation, (2) and sequester the DSB for repair by NHEJ. Acts as a scaffold protein to aid the localization of DNA repair proteins to the site of damage. The assembly of the DNA-PK complex at DNA ends is also required for the NHEJ ligation step. Found at the ends of chromosomes, suggesting a further role in the maintenance of telomeric stability and the prevention of chromosomal end fusion. Also involved in modulation of transcription. As part of the DNA-PK complex, involved in the early steps of ribosome assembly by promoting the processing of precursor rRNA into mature 18S rRNA in the small-subunit processome. Binding to U3 small nucleolar RNA, recruits PRKDC and XRCC5/Ku86 to the small-subunit processome. Recognizes the substrate consensus sequence [ST]-Q. Phosphorylates 'Ser-139' of histone variant H2AX, thereby regulating DNA damage response mechanism. Phosphorylates ASF1A, DCLRE1C, c-Abl/ABL1, histone H1, HSPCA, c-jun/JUN, p53/TP53, PARP1, POU2F1, DHX9, FH, SRF, NHEJ1/XLF, XRCC1, XRCC4, XRCC5, XRCC6, WRN, MYC and RFA2. Can phosphorylate C1D not only in the presence of linear DNA but also in the presence of supercoiled DNA. Ability to phosphorylate p53/TP53 in the presence of supercoiled DNA is dependent on C1D. Acts as a regulator of the phosphatidylinositol 3-kinase/protein kinase B signal transduction by mediating phosphorylation of 'Ser-473' of protein kinase B (PKB/AKT1, PKB/AKT2, PKB/AKT3), promoting their activation. Contributes to the determination of the circadian period length by antagonizing phosphorylation of CRY1 'Ser-588' and increasing CRY1 protein stability, most likely through an indirect mechanism. Plays a role in the regulation of DNA virus-mediated innate immune response by assembling into the HDP-RNP complex, a complex that serves as a platform for IRF3 phosphorylation and subsequent innate immune response activation through the cGAS-STING pathway. Also regulates the cGAS-STING pathway by catalyzing phosphorylation of CGAS, thereby impairing CGAS oligomerization and activation. Also regulates the cGAS-STING pathway by mediating phosphorylation of PARP1. This chain is DNA-dependent protein kinase catalytic subunit (PRKDC), found in Homo sapiens (Human).